The sequence spans 280 residues: DegV domain-containing protein SPy_1698/M5005_Spy1391 (280 aa).

A DegV domain is found at 3–280 (WKIVTDSGCD…DGGLLMGYEI (278 aa)). Hexadecanoate is bound by residues Ser-63 and Ser-91.

Its function is as follows. May bind long-chain fatty acids, such as palmitate, and may play a role in lipid transport or fatty acid metabolism. The protein is DegV domain-containing protein SPy_1698/M5005_Spy1391 of Streptococcus pyogenes serotype M1.